Reading from the N-terminus, the 377-residue chain is Endolytic peptidoglycan transglycosylase RlpA (377 aa).

The N-terminal stretch at 1–19 (MHKQLPVICVAAGIVLLAA) is a signal peptide. Cysteine 20 carries the N-palmitoyl cysteine lipid modification. Cysteine 20 carries S-diacylglycerol cysteine lipidation. Residues 196–277 (LPPRPDLSGG…PVSAPVTAPA (82 aa)) form a disordered region. Low complexity-rich tracts occupy residues 208-218 (SASSAPAQPQG) and 264-277 (PQTA…TAPA). In terms of domain architecture, SPOR spans 300–376 (AAASGRFVVQ…AQLQSFIASA (77 aa)).

The protein belongs to the RlpA family.

The protein resides in the cell membrane. Lytic transglycosylase with a strong preference for naked glycan strands that lack stem peptides. The polypeptide is Endolytic peptidoglycan transglycosylase RlpA (Salmonella typhi).